A 480-amino-acid chain; its full sequence is Cytochrome c oxidase subunit 1 (480 aa).

Residues 22-42 (ISYLWLAYWFGMIGFYMSVLI) form a helical membrane-spanning segment. Positions 45 and 50 each coordinate Ca(2+). Transmembrane regions (helical) follow at residues 64–84 (LLFT…GLFG), 109–129 (SLLL…LEIG), 151–171 (LIIF…INFI), 194–214 (IVLT…VFLM), 240–260 (LFWF…FGII), 278–298 (MILA…HHMY), 309–329 (YFTT…FNWV), and 343–363 (LILF…TGVV). Residue His69 participates in Fe(II)-heme a binding. Residue His246 participates in Cu cation binding. Positions 246 to 250 (HPEVY) form a cross-link, 1'-histidyl-3'-tyrosine (His-Tyr). Tyr250 is an O2 binding site. Residues His295 and His296 each contribute to the Cu cation site. Residues His374 and Asp375 each contribute to the Mg(2+) site. Heme a3 is bound at residue His382. A run of 2 helical transmembrane segments spans residues 382 to 402 (HFHF…IVYI) and 416 to 436 (LSLM…PMHF). His384 contributes to the Fe(II)-heme a binding site. Pro447 provides a ligand contact to Ca(2+). A helical membrane pass occupies residues 458-478 (FICTLGATMMLVLKLTVLFII).

This sequence belongs to the heme-copper respiratory oxidase family. As to quaternary structure, component of the cytochrome c oxidase (complex IV, CIV), a multisubunit enzyme composed of a catalytic core of 3 subunits and several supernumerary subunits. The complex exists as a monomer or a dimer and forms supercomplexes (SCs) in the inner mitochondrial membrane with ubiquinol-cytochrome c oxidoreductase (cytochrome b-c1 complex, complex III, CIII). It depends on heme as a cofactor. Cu cation is required as a cofactor.

It is found in the mitochondrion inner membrane. It catalyses the reaction 4 Fe(II)-[cytochrome c] + O2 + 8 H(+)(in) = 4 Fe(III)-[cytochrome c] + 2 H2O + 4 H(+)(out). It participates in energy metabolism; oxidative phosphorylation. Functionally, component of the cytochrome c oxidase, the last enzyme in the mitochondrial electron transport chain which drives oxidative phosphorylation. The respiratory chain contains 3 multisubunit complexes succinate dehydrogenase (complex II, CII), ubiquinol-cytochrome c oxidoreductase (cytochrome b-c1 complex, complex III, CIII) and cytochrome c oxidase (complex IV, CIV), that cooperate to transfer electrons derived from NADH and succinate to molecular oxygen, creating an electrochemical gradient over the inner membrane that drives transmembrane transport and the ATP synthase. Cytochrome c oxidase is the component of the respiratory chain that catalyzes the reduction of oxygen to water. Electrons originating from reduced cytochrome c in the intermembrane space (IMS) are transferred via the dinuclear copper A center (CU(A)) of subunit 2 and heme A of subunit 1 to the active site in subunit 1, a binuclear center (BNC) formed by heme A3 and copper B (CU(B)). The BNC reduces molecular oxygen to 2 water molecules using 4 electrons from cytochrome c in the IMS and 4 protons from the mitochondrial matrix. In Theileria annulata, this protein is Cytochrome c oxidase subunit 1 (MT-CO1).